The sequence spans 148 residues: Arginine repressor (148 aa).

The protein belongs to the ArgR family.

It localises to the cytoplasm. It participates in amino-acid biosynthesis; L-arginine biosynthesis [regulation]. Functionally, regulates arginine biosynthesis genes. This chain is Arginine repressor, found in Chloroherpeton thalassium (strain ATCC 35110 / GB-78).